A 1462-amino-acid polypeptide reads, in one-letter code: NK-tumor recognition protein (1462 aa).

The PPIase cyclophilin-type domain maps to 10–175 (HFDIEINREP…ADVRVIDCGV (166 aa)). 2 disordered regions span residues 187–591 (KKRK…TMAQ) and 607–627 (VIPL…KPWK). Positions 198-213 (SDSSSNSSSSSESSSE) are enriched in low complexity. The segment covering 221-240 (SRRRKHKRRPKVKRSKKRRK) has biased composition (basic residues). Composition is skewed to basic and acidic residues over residues 241 to 250 (EASSSEEPRN) and 258 to 286 (GHSE…RPEE). Lys323 is covalently cross-linked (Glycyl lysine isopeptide (Lys-Gly) (interchain with G-Cter in SUMO2)). A compositionally biased stretch (basic residues) spans 329-345 (SGRKIKGRGTIRYHTPP). Ser379, Ser401, and Ser416 each carry phosphoserine. Over residues 382 to 402 (KWSKGDKLSDPCSSRWDERSL) the composition is skewed to basic and acidic residues. The segment covering 403–421 (SQRSRSWSYNGYYSDLSTA) has biased composition (polar residues). A compositionally biased stretch (basic residues) spans 423–459 (HSGHHKKRRKEKKVKHKKKGKKQKHCRRHKQTKKRRI). Residues Ser463 and Ser471 each carry the phosphoserine modification. A compositionally biased stretch (basic and acidic residues) spans 497 to 507 (KRDWSKSDKDV). The segment covering 524–542 (HSQSYSRGSSRSRTASKSS) has biased composition (low complexity). Over residues 543–568 (SHSRSRSKSRSSSKSGHRKRASKSPR) the composition is skewed to basic residues. Glycyl lysine isopeptide (Lys-Gly) (interchain with G-Cter in SUMO2) cross-links involve residues Lys578 and Lys581. Ser613 carries the post-translational modification Phosphoserine. Lys639 is covalently cross-linked (Glycyl lysine isopeptide (Lys-Gly) (interchain with G-Cter in SUMO2)). Phosphoserine is present on Ser648. Residues Lys656 and Lys666 each participate in a glycyl lysine isopeptide (Lys-Gly) (interchain with G-Cter in SUMO2) cross-link. Residues 658 to 1072 (TGSSSSYHKR…EEDLSGKHDT (415 aa)) form a disordered region. Low complexity-rich tracts occupy residues 699 to 725 (SRSY…PSSR) and 736 to 749 (SQCS…SISS). The span at 754 to 774 (RAKRRLRSSGKKNSVSHKKHS) shows a compositional bias: basic residues. Positions 775-800 (SSSEKTLHSKYVKGRDRSSCVRKYSE) are enriched in basic and acidic residues. Residues 801-815 (SRSSLDYSSDSEQSS) are compositionally biased toward low complexity. 2 stretches are compositionally biased toward basic and acidic residues: residues 823–870 (QEKE…DHLR) and 885–909 (WDSE…SSDK). Ser866, Ser887, Ser889, Ser891, and Ser907 each carry phosphoserine. Positions 910–922 (EEGEATSDSESEV) are enriched in acidic residues. The span at 932–969 (TTKSSTNTSLPDDNGAWKSSKQRTSTSDSEGSCSNSEN) shows a compositional bias: polar residues. The segment covering 988 to 1013 (EHTKKVKEKLKGKKDKKHKAPKRKQA) has biased composition (basic residues). The span at 1022 to 1031 (FGEEEEEEID) shows a compositional bias: acidic residues. Over residues 1032-1072 (DKQVTQESKEKKVSENNETIKDNILKTEKSSEEDLSGKHDT) the composition is skewed to basic and acidic residues. Residue Lys1057 forms a Glycyl lysine isopeptide (Lys-Gly) (interchain with G-Cter in SUMO2) linkage. A phosphoserine mark is found at Ser1077 and Ser1146. A disordered region spans residues 1129–1156 (MEICTPDRSSPAKVEETSPLGNARLDTP). Thr1155 is subject to Phosphothreonine. Residue Lys1163 forms a Glycyl lysine isopeptide (Lys-Gly) (interchain with G-Cter in SUMO2) linkage. Residues 1169 to 1215 (EHPQAEVVKQESSMSESKVLGEVGKQDSSSASLASAGESTGKKEVAE) form a disordered region. A Glycyl lysine isopeptide (Lys-Gly) (interchain with G-Cter in SUMO1); alternate cross-link involves residue Lys1177. Residue Lys1177 forms a Glycyl lysine isopeptide (Lys-Gly) (interchain with G-Cter in SUMO2); alternate linkage. Residue Ser1203 is modified to Phosphoserine. Glycyl lysine isopeptide (Lys-Gly) (interchain with G-Cter in SUMO2) cross-links involve residues Lys1216, Lys1225, and Lys1258. A disordered region spans residues 1251–1462 (LTTVPEMKPQ…RSPSESSRYS (212 aa)). The arg/Ser tandem repeat-rich stretch occupies residues 1311–1348 (SRSPSRSRSKSETKSRHRTRSVSYSHSRSRSRSSTSSY). Composition is skewed to low complexity over residues 1331–1351 (SVSY…YRSR) and 1359–1376 (RGWY…SYRS). Residues 1377–1388 (YKSHRTSSRSRS) are compositionally biased toward basic residues. Residues 1389–1410 (RSSSYDPHSRSRSYTYDSYYSR) show a composition bias toward low complexity. Positions 1425–1435 (RGRSYNRRSRS) are enriched in basic residues.

Its subcellular location is the cell membrane. It carries out the reaction [protein]-peptidylproline (omega=180) = [protein]-peptidylproline (omega=0). With respect to regulation, inhibited by cyclosporin A (CsA). In terms of biological role, PPIase that catalyzes the cis-trans isomerization of proline imidic peptide bonds in oligopeptides and may therefore assist protein folding. Component of a putative tumor-recognition complex involved in the function of NK cells. This Homo sapiens (Human) protein is NK-tumor recognition protein.